Here is a 335-residue protein sequence, read N- to C-terminus: Dolichyl-diphosphooligosaccharide--protein glycosyltransferase subunit MAGT1 (335 aa).

The signal sequence occupies residues 1-29 (MASPRWLWCVCATAAVTLLLVSKVPSASA). At 30-184 (QRKKEKVLVE…DVNIRVIRPP (155 aa)) the chain is on the extracellular side. A Thioredoxin domain is found at 47–175 (WTNQRPVIRM…IARWIADRTD (129 aa)). N-linked (GlcNAc...) asparagine glycosylation occurs at Asn-71. The cysteines at positions 87 and 90 are disulfide-linked. Residues 185-205 (NYAGPLMLGLLLAVIGGLVYL) form a helical membrane-spanning segment. Residues 206 to 209 (RRSN) are Cytoplasmic-facing. The helical transmembrane segment at 210–230 (MEFLFNKTGWAFAALCFVLAM) threads the bilayer. At 231–270 (TSGQMWNHIRGPPYAHKNPHTGHVNYIHGSSQAQFVAETH) the chain is on the extracellular side. The helical transmembrane segment at 271 to 291 (IVLLFNGGVTLGMVLLCEAAA) threads the bilayer. The Cytoplasmic segment spans residues 292 to 300 (SDMDIGKRR). Residues 301–321 (MMCIAGIGLVVLFFSWMLSIF) traverse the membrane as a helical segment. The Extracellular segment spans residues 322-335 (RSKYHGYPYSFLMS).

It belongs to the OST3/OST6 family. Accessory component of the STT3B-containing form of the oligosaccharyltransferase (OST) complex. OST exists in two different complex forms which contain common core subunits RPN1, RPN2, OST48, OST4, DAD1 and TMEM258, either STT3A or STT3B as catalytic subunits, and form-specific accessory subunits. OST can form stable complexes with the Sec61 complex or with both the Sec61 and TRAP complexes. The association of TUSC3 or MAGT1 with the STT3B-containing complex seems to be mutually exclusvice.

It localises to the cell membrane. It is found in the endoplasmic reticulum. The protein resides in the endoplasmic reticulum membrane. It functions in the pathway protein modification; protein glycosylation. Accessory component of the STT3B-containing form of the N-oligosaccharyl transferase (OST) complex which catalyzes the transfer of a high mannose oligosaccharide from a lipid-linked oligosaccharide donor to an asparagine residue within an Asn-X-Ser/Thr consensus motif in nascent polypeptide chains. Involved in N-glycosylation of STT3B-dependent substrates. Specifically required for the glycosylation of a subset of acceptor sites that are near cysteine residues; in this function seems to act redundantly with TUSC3. In its oxidized form proposed to form transient mixed disulfides with a glycoprotein substrate to facilitate access of STT3B to the unmodified acceptor site. Also has oxidoreductase-independent functions in the STT3B-containing OST complex possibly involving substrate recognition. Could indirectly play a role in Mg(2+) transport in epithelial cells. The protein is Dolichyl-diphosphooligosaccharide--protein glycosyltransferase subunit MAGT1 of Rattus norvegicus (Rat).